We begin with the raw amino-acid sequence, 973 residues long: UvrABC system protein A (973 aa).

34-41 (GLSGSGKS) lines the ATP pocket. ABC transporter domains lie at 330–609 (WAKS…PNSI) and 629–958 (AKKN…QFLK). Residue 662-669 (GVSGGGKS) coordinates ATP. The C4-type zinc finger occupies 761-787 (CEACQGDGVIKIEMHFLPDVYVTCDVC).

This sequence belongs to the ABC transporter superfamily. UvrA family. Forms a heterotetramer with UvrB during the search for lesions.

The protein resides in the cytoplasm. Its function is as follows. The UvrABC repair system catalyzes the recognition and processing of DNA lesions. UvrA is an ATPase and a DNA-binding protein. A damage recognition complex composed of 2 UvrA and 2 UvrB subunits scans DNA for abnormalities. When the presence of a lesion has been verified by UvrB, the UvrA molecules dissociate. The protein is UvrABC system protein A of Mesorhizobium japonicum (strain LMG 29417 / CECT 9101 / MAFF 303099) (Mesorhizobium loti (strain MAFF 303099)).